A 129-amino-acid chain; its full sequence is uncharacterized protein (129 aa).

The disordered stretch occupies residues 44 to 63 (PYRAADRSNDQDNDRSGGNV). Residues 46-58 (RAADRSNDQDNDR) are compositionally biased toward basic and acidic residues. The next 2 membrane-spanning stretches (helical) occupy residues 78-98 (IISL…VGYI) and 109-129 (AWAM…IPFF).

It localises to the cell membrane. This is an uncharacterized protein from Bacillus subtilis (strain 168).